The sequence spans 349 residues: Ion-translocating oxidoreductase complex subunit D (349 aa).

Helical transmembrane passes span 36–56 (CAFF…VALS), 77–99 (SAML…WMIV), and 124–144 (AMAA…SWIA). Threonine 185 is modified (FMN phosphoryl threonine). Transmembrane regions (helical) follow at residues 212-232 (GTGV…LVLL), 239-259 (WHIS…GFLL), 265-285 (ASPL…FIAT), 291-311 (ATSP…VYVI), and 315-335 (GGYP…APFI).

It belongs to the NqrB/RnfD family. The complex is composed of six subunits: RnfA, RnfB, RnfC, RnfD, RnfE and RnfG. FMN is required as a cofactor.

The protein resides in the cell inner membrane. Its function is as follows. Part of a membrane-bound complex that couples electron transfer with translocation of ions across the membrane. The polypeptide is Ion-translocating oxidoreductase complex subunit D (Shewanella sp. (strain MR-4)).